A 360-amino-acid polypeptide reads, in one-letter code: UPF0496 protein At3g19250 (360 aa).

Residues 1 to 29 form a disordered region; sequence MPHCFTFKPASPEGSLGDDHLPHPSPEGS. Helical transmembrane passes span 205–225 and 229–249; these read HHAT…VAAS and IAYH…TPYL.

It belongs to the UPF0496 family.

The protein localises to the membrane. The polypeptide is UPF0496 protein At3g19250 (Arabidopsis thaliana (Mouse-ear cress)).